Consider the following 531-residue polypeptide: Probable cytochrome P450 4e1 (531 aa).

Heme is bound by residues Glu307 and Cys444.

This sequence belongs to the cytochrome P450 family. The cofactor is heme.

It localises to the endoplasmic reticulum membrane. The protein resides in the microsome membrane. Its function is as follows. May be involved in the metabolism of insect hormones and in the breakdown of synthetic insecticides. This is Probable cytochrome P450 4e1 (Cyp4e1) from Drosophila melanogaster (Fruit fly).